An 856-amino-acid chain; its full sequence is DNA mismatch repair protein MutS (856 aa).

Position 618 to 625 (618 to 625) interacts with ATP; that stretch reads GPNMGGKS.

This sequence belongs to the DNA mismatch repair MutS family.

Its function is as follows. This protein is involved in the repair of mismatches in DNA. It is possible that it carries out the mismatch recognition step. This protein has a weak ATPase activity. The protein is DNA mismatch repair protein MutS of Shewanella putrefaciens (strain CN-32 / ATCC BAA-453).